Here is a 956-residue protein sequence, read N- to C-terminus: Zinc fingers and homeoboxes protein 3 (956 aa).

The interval 1-107 (MASKRKSTTP…SEHTDFNKDP (107 aa)) is required for nuclear localization. A disordered region spans residues 22–66 (DASMEAQPAETLPEGPQQDLPPEASAASSEAAQNPSSTDGSTLAN). Positions 42–58 (PPEASAASSEAAQNPSS) are enriched in low complexity. 2 consecutive C2H2-type zinc fingers follow at residues 77 to 100 (YSCKYCDFRSHDMTQFVGHMNSEH) and 109 to 132 (FVCSGCSFLAKTPEGLSLHNATCH). The required for homodimerization and interaction with NFYA stretch occupies residues 242–488 (ASASSAKNPH…LLTACPSITS (247 aa)). The tract at residues 303–502 (LSSIPTYNAA…DASIYKNKKS (200 aa)) is required for repressor activity. DNA-binding regions (homeobox) lie at residues 304-363 (SSIP…GISW) and 494-553 (ASIY…RNLK). The interval 497-555 (YKNKKSHEQLSALKGSFCRNQFPGQSEVEHLTKVTGLSTREVRKWFSDRRYHCRNLKGS) is required for nuclear localization. Disordered stretches follow at residues 598–618 (PSAKRQSWHQTPDFTPTKYKE) and 666–695 (KVNAEETKKAEENASQEEEEAAEDEGGEED). Phosphoserine is present on residues Ser599 and Ser604. The segment at residues 612 to 671 (TPTKYKERAPEQLRALESSFAQNPLPLDEELDRLRSETKMTRREIDSWFSERRKKVNAEE) is a DNA-binding region (homeobox 3). The span at 666–677 (KVNAEETKKAEE) shows a compositional bias: basic and acidic residues. Acidic residues predominate over residues 679–695 (ASQEEEEAAEDEGGEED). Phosphoserine occurs at positions 680, 708, and 723. 2 DNA-binding regions (homeobox) span residues 764–823 (PGKV…KNGQ) and 835–894 (FPPG…TRAV). The disordered stretch occupies residues 890–956 (ETRAVADTGS…PQAGRQLETD (67 aa)). Residues Ser927 and Ser946 each carry the phosphoserine modification.

It belongs to the ZHX family. As to quaternary structure, homodimer (via homeobox domain 1). Heterodimer with ZHX1 (via homeobox domain 1). Heterodimer with ZHX2 (via homeobox domain 1). Heterodimerization with ZHX1 is a prerequisite for repressor activity. Interacts with NFYA. In terms of tissue distribution, widely expressed. High expression in kidney. Expressed during osteogenic differentiation.

Its subcellular location is the nucleus. Its function is as follows. Acts as a transcriptional repressor. Involved in the early stages of mesenchymal stem cell (MSC) osteogenic differentiation. Is a regulator of podocyte gene expression during primary glomerula disease. Binds to promoter DNA. This chain is Zinc fingers and homeoboxes protein 3 (ZHX3), found in Homo sapiens (Human).